A 259-amino-acid polypeptide reads, in one-letter code: Thiazole synthase (259 aa).

Lys-99 (schiff-base intermediate with DXP) is an active-site residue. 1-deoxy-D-xylulose 5-phosphate is bound by residues Gly-161, 187–188, and 209–210; these read AG and NT.

The protein belongs to the ThiG family. Homotetramer. Forms heterodimers with either ThiH or ThiS.

It localises to the cytoplasm. It carries out the reaction [ThiS sulfur-carrier protein]-C-terminal-Gly-aminoethanethioate + 2-iminoacetate + 1-deoxy-D-xylulose 5-phosphate = [ThiS sulfur-carrier protein]-C-terminal Gly-Gly + 2-[(2R,5Z)-2-carboxy-4-methylthiazol-5(2H)-ylidene]ethyl phosphate + 2 H2O + H(+). The protein operates within cofactor biosynthesis; thiamine diphosphate biosynthesis. Catalyzes the rearrangement of 1-deoxy-D-xylulose 5-phosphate (DXP) to produce the thiazole phosphate moiety of thiamine. Sulfur is provided by the thiocarboxylate moiety of the carrier protein ThiS. In vitro, sulfur can be provided by H(2)S. The sequence is that of Thiazole synthase from Sulfurimonas denitrificans (strain ATCC 33889 / DSM 1251) (Thiomicrospira denitrificans (strain ATCC 33889 / DSM 1251)).